We begin with the raw amino-acid sequence, 241 residues long: 3-oxoacyl-[acyl-carrier-protein] reductase FabG (241 aa).

NADP(+) contacts are provided by residues 13–16 (GASG), Ser38, 57–58 (KV), and Asn83. Substrate is bound at residue Ser135. Residue Tyr148 is the Proton acceptor of the active site. Residues 148 to 152 (YCASK) and Ile181 contribute to the NADP(+) site.

The protein belongs to the short-chain dehydrogenases/reductases (SDR) family. As to quaternary structure, homotetramer.

It carries out the reaction a (3R)-hydroxyacyl-[ACP] + NADP(+) = a 3-oxoacyl-[ACP] + NADPH + H(+). It participates in lipid metabolism; fatty acid biosynthesis. In terms of biological role, catalyzes the NADPH-dependent reduction of beta-ketoacyl-ACP substrates to beta-hydroxyacyl-ACP products, the first reductive step in the elongation cycle of fatty acid biosynthesis. This chain is 3-oxoacyl-[acyl-carrier-protein] reductase FabG (fabG), found in Rickettsia bellii (strain RML369-C).